We begin with the raw amino-acid sequence, 277 residues long: Large ribosomal subunit protein uL2 (277 aa).

The tract at residues 222-258 (GSVMNPCDHPHGGGEGRSPIGRPSPVTPWGKPALGYK) is disordered.

This sequence belongs to the universal ribosomal protein uL2 family. Part of the 50S ribosomal subunit. Forms a bridge to the 30S subunit in the 70S ribosome.

In terms of biological role, one of the primary rRNA binding proteins. Required for association of the 30S and 50S subunits to form the 70S ribosome, for tRNA binding and peptide bond formation. It has been suggested to have peptidyltransferase activity; this is somewhat controversial. Makes several contacts with the 16S rRNA in the 70S ribosome. This Clostridium perfringens (strain 13 / Type A) protein is Large ribosomal subunit protein uL2.